Consider the following 136-residue polypeptide: Small cardioactive peptides (136 aa).

A signal peptide spans 1-24; it reads METSVSRVTVSLTLLVLIICSADA. Methionine amide is present on residues methionine 33 and methionine 46. Residues 49 to 135 constitute a propeptide, carboxy-terminal peptide; that stretch reads SQMKTETGTD…VLSKLKSLLQ (87 aa).

It belongs to the SCP family. Contains three disulfide bonds. As to expression, highly expressed in the buccal ganglion.

It is found in the secreted. Involved in the stimulation of contractile activity in the gut, the increase of the amplitude of the heart beat, and enhancement of the contractile response of the radula closer muscle. The sequence is that of Small cardioactive peptides from Aplysia californica (California sea hare).